The primary structure comprises 495 residues: uncharacterized protein (495 aa).

The FAD site is built by serine 16, glutamate 36, tryptophan 45, aspartate 56, tyrosine 62, and valine 105.

Belongs to the FAD-binding monooxygenase family. FAD is required as a cofactor.

This is an uncharacterized protein from Mycobacterium tuberculosis (strain CDC 1551 / Oshkosh).